Here is a 469-residue protein sequence, read N- to C-terminus: MTQDGTWSDESDWELDDADLADLAEAAPAPVLAIVGRPNVGKSTLVNRILGRREAVVQDIPGVTRDRVSYDALWNGRRFVVQDTGGWEPDAKGLQQLVAEQASVAMRTADAVVLVVDATVGATTADEAAARILLRSGKPVFLAANKVDSDKAEADAATLWSMGLGEPHAISAMHGRGVADLLDTVLKKLPEVAESVSAGGGPRRVALVGKPNVGKSSLLNKLAGDERSVVHDVAGTTVDPVDSLIELGGKVWRFVDTAGLRRKVGQASGHEFYASVRTRGAIDAAEVVVLLIDASQPLTEQDLRVLSMVIEAGRAVVLAYNKWDLVDEDRRDLLDREIDRELVQIRWAQRVNISAKTGRAVQKLVPAMETALASWDTRIPTGPLNSWIKEVVAATPPPVRGGKQPRILFATQATARPPTFVLFTTGFLEAGYRRFLERRLRETFGFEGSPIRINVRVREKRGAKRPGRR.

EngA-type G domains lie at 30–193 (PVLA…PEVA) and 203–376 (RRVA…ASWD). GTP contacts are provided by residues 36–43 (GRPNVGKS), 83–87 (DTGGW), 145–148 (NKVD), 209–216 (GKPNVGKS), 256–260 (DTAGL), and 321–324 (NKWD). The 83-residue stretch at 377 to 459 (TRIPTGPLNS…PIRINVRVRE (83 aa)) folds into the KH-like domain.

This sequence belongs to the TRAFAC class TrmE-Era-EngA-EngB-Septin-like GTPase superfamily. EngA (Der) GTPase family. Associates with the 50S ribosomal subunit.

GTPase that plays an essential role in the late steps of ribosome biogenesis. In Mycobacterium marinum (strain ATCC BAA-535 / M), this protein is GTPase Der.